Here is a 72-residue protein sequence, read N- to C-terminus: Translation initiation factor IF-1 (72 aa).

Residues 1–72 form the S1-like domain; the sequence is MAKEEVLEFP…TKGRITYRLK (72 aa).

Belongs to the IF-1 family. As to quaternary structure, component of the 30S ribosomal translation pre-initiation complex which assembles on the 30S ribosome in the order IF-2 and IF-3, IF-1 and N-formylmethionyl-tRNA(fMet); mRNA recruitment can occur at any time during PIC assembly.

It is found in the cytoplasm. One of the essential components for the initiation of protein synthesis. Stabilizes the binding of IF-2 and IF-3 on the 30S subunit to which N-formylmethionyl-tRNA(fMet) subsequently binds. Helps modulate mRNA selection, yielding the 30S pre-initiation complex (PIC). Upon addition of the 50S ribosomal subunit IF-1, IF-2 and IF-3 are released leaving the mature 70S translation initiation complex. This chain is Translation initiation factor IF-1, found in Brucella suis biovar 1 (strain 1330).